Reading from the N-terminus, the 494-residue chain is Glycerol kinase (494 aa).

Residue Thr13 participates in ADP binding. ATP contacts are provided by Thr13, Thr14, and Ser15. Thr13 contacts sn-glycerol 3-phosphate. Arg17 lines the ADP pocket. Sn-glycerol 3-phosphate contacts are provided by Arg83, Glu84, Tyr135, and Asp244. 5 residues coordinate glycerol: Arg83, Glu84, Tyr135, Asp244, and Gln245. ADP is bound by residues Thr266 and Gly309. 4 residues coordinate ATP: Thr266, Gly309, Gln313, and Gly410. The ADP site is built by Gly410 and Asn414.

The protein belongs to the FGGY kinase family.

It catalyses the reaction glycerol + ATP = sn-glycerol 3-phosphate + ADP + H(+). Its pathway is polyol metabolism; glycerol degradation via glycerol kinase pathway; sn-glycerol 3-phosphate from glycerol: step 1/1. Inhibited by fructose 1,6-bisphosphate (FBP). In terms of biological role, key enzyme in the regulation of glycerol uptake and metabolism. Catalyzes the phosphorylation of glycerol to yield sn-glycerol 3-phosphate. This chain is Glycerol kinase, found in Shewanella oneidensis (strain ATCC 700550 / JCM 31522 / CIP 106686 / LMG 19005 / NCIMB 14063 / MR-1).